Reading from the N-terminus, the 445-residue chain is Argininosuccinate synthase (445 aa).

ATP is bound by residues 17–25 and A43; that span reads AFSGGLDTS. Y99 is a binding site for L-citrulline. Residues G129 and T131 each contribute to the ATP site. The L-aspartate site is built by T131, N135, and D136. An L-citrulline-binding site is contributed by N135. ATP is bound at residue D136. The L-citrulline site is built by R139 and S192. D194 contributes to the ATP binding site. The L-citrulline site is built by T201, E203, and E280.

It belongs to the argininosuccinate synthase family. Type 2 subfamily. Homotetramer.

The protein localises to the cytoplasm. The catalysed reaction is L-citrulline + L-aspartate + ATP = 2-(N(omega)-L-arginino)succinate + AMP + diphosphate + H(+). It functions in the pathway amino-acid biosynthesis; L-arginine biosynthesis; L-arginine from L-ornithine and carbamoyl phosphate: step 2/3. This Ralstonia pickettii (strain 12J) protein is Argininosuccinate synthase.